A 551-amino-acid chain; its full sequence is Transcription factor 7-like 1-B (551 aa).

Residues 1–11 are compositionally biased toward gly residues; it reads MPQLNSGGGDE. The interval 1–61 is interaction with CTNNB1-A; that stretch reads MPQLNSGGGD…SENHSSDSDS (61 aa). Disordered stretches follow at residues 1–77, 183–213, 391–474, and 492–515; these read MPQL…EKPR, GTPP…PYYP, WSAR…SLTT, and SPSS…SRPI. Composition is skewed to basic and acidic residues over residues 17–32 and 52–77; these read ELIR…EKSP and SENH…EKPR. Residues 109 to 312 form an interaction with AES and TLE4-A region; it reads LGGHYLPNGA…SPNLSTKSNV (204 aa). Positions 324–392 form a DNA-binding region, HMG box; that stretch reads IKKPLNAFML…LHSQLYPSWS (69 aa). Residues 407-416 are compositionally biased toward basic and acidic residues; it reads KQSPEMENYT. The segment at 408-551 is interaction with CTBP-B; that stretch reads QSPEMENYTK…PLSLVTRSSD (144 aa). Low complexity predominate over residues 445–464; that stretch reads SPATPSAALASPAAPAATHS. Polar residues predominate over residues 465–474; the sequence is EQAQPLSLTT.

Belongs to the TCF/LEF family. In terms of assembly, interacts with csnk1e, ctnnb1-A, ctbp-B, dact1-A and gsk3b. May interact with ase and tle4-A. Interacts with tle1-B. In terms of processing, phosphorylated. Phosphorylation by csnk1e promotes binding to ctnnb1-A while phosphorylation by gsk3b may reverse this effect.

The protein resides in the nucleus. In terms of biological role, participates in the Wnt signaling pathway. Binds to DNA and acts as a repressor in the absence of ctnnb1-A and possibly ctnnb1-B, and as an activator in the presence of these proteins. Required early in development for the establishment of the dorsal body axis in response to maternal Wnt signaling. This is Transcription factor 7-like 1-B (tcf7l1-b) from Xenopus laevis (African clawed frog).